A 365-amino-acid polypeptide reads, in one-letter code: Patr class I histocompatibility antigen, A-2 alpha chain (365 aa).

Residues M1–A24 form the signal peptide. The tract at residues G25–D114 is alpha-1. The Extracellular segment spans residues G25–I308. N110 carries an N-linked (GlcNAc...) asparagine glycan. The alpha-2 stretch occupies residues G115–T206. Disulfide bonds link C125–C188 and C227–C283. The tract at residues D207 to W298 is alpha-3. The Ig-like C1-type domain maps to P209–T295. Residues E299 to I308 form a connecting peptide region. Residues V309 to W332 form a helical membrane-spanning segment. The Cytoplasmic segment spans residues R333–V365. The tract at residues R339–L360 is disordered. The residue at position 343 (S343) is a Phosphoserine. Y344 carries the phosphotyrosine modification. Low complexity predominate over residues Q346–S359. Phosphoserine is present on residues S349, S350, S352, S356, and S359.

It belongs to the MHC class I family. In terms of assembly, heterodimer of an alpha chain and a beta chain (beta-2-microglobulin).

Its subcellular location is the membrane. Functionally, involved in the presentation of foreign antigens to the immune system. The polypeptide is Patr class I histocompatibility antigen, A-2 alpha chain (Pan troglodytes (Chimpanzee)).